The primary structure comprises 728 residues: UvrABC system protein C (728 aa).

The 80-residue stretch at 16–95 (DSPGVYRFRD…IKEYDPRFNV (80 aa)) folds into the GIY-YIG domain. The UVR domain occupies 208–243 (GTYLRRLERQMAEAAEEMEYERAARLRDDIGALKKA). 2 disordered regions span residues 473–535 (ADGE…GRPK) and 689–728 (VNTA…GQER). Over residues 487–505 (GDAAPNGDAAPNDGAAPDD) the composition is skewed to low complexity.

The protein belongs to the UvrC family. Interacts with UvrB in an incision complex.

The protein localises to the cytoplasm. The UvrABC repair system catalyzes the recognition and processing of DNA lesions. UvrC both incises the 5' and 3' sides of the lesion. The N-terminal half is responsible for the 3' incision and the C-terminal half is responsible for the 5' incision. This Streptomyces coelicolor (strain ATCC BAA-471 / A3(2) / M145) protein is UvrABC system protein C.